Consider the following 319-residue polypeptide: RNA polymerase II holoenzyme cyclin-like subunit (319 aa).

The region spanning 53–142 is the Cyclin N-terminal domain; it reads QQLIRLAKRL…LGECEFFMIS (90 aa). Low complexity predominate over residues 237-251; the sequence is QGQQAQGGMPEPAAA. The disordered stretch occupies residues 237-261; it reads QGQQAQGGMPEPAAAEPKEKRQQDR. The span at 252–261 shows a compositional bias: basic and acidic residues; the sequence is EPKEKRQQDR.

The protein belongs to the cyclin family. Cyclin C subfamily. As to quaternary structure, component of the SRB8-11 complex, a regulatory module of the Mediator complex. Interacts with SSN3/FCK1.

The protein resides in the nucleus. In terms of biological role, component of the SRB8-11 complex. The SRB8-11 complex is a regulatory module of the Mediator complex which is itself involved in regulation of basal and activated RNA polymerase II-dependent transcription. The SRB8-11 complex may be involved in the transcriptional repression of a subset of genes regulated by Mediator. It may inhibit the association of the Mediator complex with RNA polymerase II to form the holoenzyme complex. The SRB8-11 complex phosphorylates the C-terminal domain (CTD) of the largest subunit of RNA polymerase II. May play a role in signal transduction pathways regulating secondary metabolism and fungal development (conidiation). This chain is RNA polymerase II holoenzyme cyclin-like subunit (SSN8), found in Gibberella moniliformis (Maize ear and stalk rot fungus).